Here is a 276-residue protein sequence, read N- to C-terminus: Proteasome subunit beta type-8 (276 aa).

A propeptide spans 1-72 (MALLEVCGAP…KNIRKEMVHG (72 aa)) (removed in mature form). Thr-73 acts as the Nucleophile in catalysis.

Belongs to the peptidase T1B family. As to quaternary structure, the 26S proteasome consists of a 20S proteasome core and two 19S regulatory subunits. The 20S proteasome core is composed of 28 subunits that are arranged in four stacked rings, resulting in a barrel-shaped structure. The two end rings are each formed by seven alpha subunits, and the two central rings are each formed by seven beta subunits. The catalytic chamber with the active sites is on the inside of the barrel. Component of the immunoproteasome, where it displaces the equivalent housekeeping subunit PSMB5. Component of the spermatoproteasome, a form of the proteasome specifically found in testis. Directly interacts with POMP. Post-translationally, autocleaved. The resulting N-terminal Thr residue of the mature subunit is responsible for the nucleophile proteolytic activity.

The protein resides in the cytoplasm. The protein localises to the nucleus. The enzyme catalyses Cleavage of peptide bonds with very broad specificity.. The proteasome is a multicatalytic proteinase complex which is characterized by its ability to cleave peptides with Arg, Phe, Tyr, Leu, and Glu adjacent to the leaving group at neutral or slightly basic pH. The proteasome has an ATP-dependent proteolytic activity. This subunit is involved in antigen processing to generate class I binding peptides. May participate in the generation of spliced peptides resulting from the ligation of two separate proteasomal cleavage products that are not contiguous in the parental protein. Required for adipocyte differentiation. In Canis lupus familiaris (Dog), this protein is Proteasome subunit beta type-8 (PSMB8).